Here is a 284-residue protein sequence, read N- to C-terminus: Ribosomal RNA small subunit methyltransferase A (284 aa).

Residues His-23, Leu-25, Gly-50, Glu-71, Asp-92, and Asn-121 each coordinate S-adenosyl-L-methionine.

Belongs to the class I-like SAM-binding methyltransferase superfamily. rRNA adenine N(6)-methyltransferase family. RsmA subfamily.

It localises to the cytoplasm. It carries out the reaction adenosine(1518)/adenosine(1519) in 16S rRNA + 4 S-adenosyl-L-methionine = N(6)-dimethyladenosine(1518)/N(6)-dimethyladenosine(1519) in 16S rRNA + 4 S-adenosyl-L-homocysteine + 4 H(+). Specifically dimethylates two adjacent adenosines (A1518 and A1519) in the loop of a conserved hairpin near the 3'-end of 16S rRNA in the 30S particle. May play a critical role in biogenesis of 30S subunits. This Verminephrobacter eiseniae (strain EF01-2) protein is Ribosomal RNA small subunit methyltransferase A.